The sequence spans 86 residues: Kappa-theraphotoxin-Cg1c (86 aa).

Residues 1-21 (MKVSVLITLAVLGVMFVWASA) form the signal peptide. A propeptide spanning residues 22–50 (AELEERGSDHRDSPAWLKSMERIFQSEER) is cleaved from the precursor. Disulfide bonds link Cys-52–Cys-66, Cys-59–Cys-71, and Cys-65–Cys-78.

This sequence belongs to the neurotoxin 10 (Hwtx-1) family. 28 (Jztx-11) subfamily. In terms of tissue distribution, expressed by the venom gland.

The protein resides in the secreted. Probable ion channel inhibitor. The chain is Kappa-theraphotoxin-Cg1c from Chilobrachys guangxiensis (Chinese earth tiger tarantula).